A 93-amino-acid chain; its full sequence is Alpha-defensin 3 (93 aa).

The signal sequence occupies residues 1–16 (MKTLVLLSALVLLAFQ). Residues 17–58 (VQADPIQNTDEETKTEEQPGEDDQAVSVSFGDPEGSSLQEES) constitute a propeptide that is removed on maturation. A disordered region spans residues 22–56 (IQNTDEETKTEEQPGEDDQAVSVSFGDPEGSSLQE). Intrachain disulfides connect Cys64-Cys92, Cys66-Cys81, and Cys71-Cys91.

The protein belongs to the alpha-defensin family. In terms of tissue distribution, paneth cells of the small bowel.

It localises to the secreted. In terms of biological role, probably contributes to the antimicrobial barrier function of the small bowel mucosa. This Mus musculus (Mouse) protein is Alpha-defensin 3 (Defa3).